A 132-amino-acid chain; its full sequence is Putative F-box protein At4g05620 (132 aa).

Residues 17 to 63 (QKKSLSLPHDVLVSCLAHVSRLHYSILSLVLKNFRSLIASPELYKTR) enclose the F-box domain.

This chain is Putative F-box protein At4g05620, found in Arabidopsis thaliana (Mouse-ear cress).